Consider the following 244-residue polypeptide: Inactive chemokine-binding protein (244 aa).

The disordered stretch occupies residues 1-79 (MHVPASLQQS…STSVEDVDPP (79 aa)). Residues 37-53 (QDQTPTNDKICQSVTEI) are compositionally biased toward polar residues. Residues 54–77 (TESESDPDPEVESEDDSTSVEDVD) are compositionally biased toward acidic residues.

This sequence belongs to the orthopoxvirus OPG001 family.

The protein localises to the host cytoplasm. In terms of biological role, the protein is truncated in this vaccinal strain and presumably inactive, because the lack of signal peptide prevents the protein of being secreted. In the other strains inhibits host immune defense by binding to host chemokines. Binds host CC chemokines (beta chemokines) such as RANTES with high affinity, but not CXC or C chemokines (alpha and gamma chemokines). The polypeptide is Inactive chemokine-binding protein (OPG001) (Vaccinia virus (strain Copenhagen) (VACV)).